A 256-amino-acid chain; its full sequence is uncharacterized protein (256 aa).

The signal sequence occupies residues 1–24 (MIKRVNKLVLGISLLFLVISITAG). Residue C25 is the site of N-palmitoyl cysteine attachment. C25 carries S-diacylglycerol cysteine lipidation.

Belongs to the staphylococcal tandem lipoprotein family.

It is found in the cell membrane. This is an uncharacterized protein from Staphylococcus aureus (strain NCTC 8325 / PS 47).